Consider the following 200-residue polypeptide: FMN-dependent NADH:quinone oxidoreductase (200 aa).

FMN-binding positions include S10, 96 to 99, and 140 to 143; these read MYNF and SRGG.

Belongs to the azoreductase type 1 family. Homodimer. FMN is required as a cofactor.

The enzyme catalyses 2 a quinone + NADH + H(+) = 2 a 1,4-benzosemiquinone + NAD(+). The catalysed reaction is N,N-dimethyl-1,4-phenylenediamine + anthranilate + 2 NAD(+) = 2-(4-dimethylaminophenyl)diazenylbenzoate + 2 NADH + 2 H(+). Functionally, quinone reductase that provides resistance to thiol-specific stress caused by electrophilic quinones. Its function is as follows. Also exhibits azoreductase activity. Catalyzes the reductive cleavage of the azo bond in aromatic azo compounds to the corresponding amines. The sequence is that of FMN-dependent NADH:quinone oxidoreductase from Photorhabdus laumondii subsp. laumondii (strain DSM 15139 / CIP 105565 / TT01) (Photorhabdus luminescens subsp. laumondii).